An 816-amino-acid polypeptide reads, in one-letter code: Sodium/hydrogen exchanger 1 (816 aa).

The Extracellular segment spans residues 1 to 98 (MLLWSAVRGL…FPVLGIDYTH (98 aa)). Residues 37-50 (LQLSPTDSTTPDSQ) show a composition bias toward polar residues. The disordered stretch occupies residues 37–79 (LQLSPTDSTTPDSQPSRERSIGDVTTAPPEVTPESRPVNRSVT). Asparagine 75 carries N-linked (GlcNAc...) asparagine glycosylation. Residues 99–121 (VRTPFEISLWILLACLMKIGFHV) form a helical membrane-spanning segment. At 122–130 (IPTISSIVP) the chain is on the cytoplasmic side. The helical transmembrane segment at 131-148 (ESCLLIVVGLLVGGLIKG) threads the bilayer. At 149-158 (VGEKPPFLQS) the chain is on the extracellular side. The chain crosses the membrane as a helical span at residues 159–176 (EVFFLFLLPPIILDAGYF). The Cytoplasmic portion of the chain corresponds to 177–186 (LPLRQFTENL). A helical membrane pass occupies residues 187–215 (GTILIFAVVGTLWNAFFLGGLMYAVCLVG). Topologically, residues 216–222 (GEQINNI) are extracellular. The chain crosses the membrane as a helical span at residues 223–249 (GLLDNLLFGSIISAVDPVAVLAVFEEI). Residues 250–252 (HIN) are Cytoplasmic-facing. The helical transmembrane segment at 253–283 (ELLHILVFGESLLNDAVTVVLYHLFEEFANY) threads the bilayer. The Extracellular portion of the chain corresponds to 284–287 (DHVG). Residues 288 to 322 (IVDIVLGFLSFFVVALGGVFVGVVYGVIAAFTSRF) traverse the membrane as a helical segment. Residues 323 to 328 (TAHIRV) are Cytoplasmic-facing. Residues 329 to 341 (IEPLFVFLYSYMA) form a helical membrane-spanning segment. The Extracellular portion of the chain corresponds to 342 to 350 (YLSAELFHL). Residues 351–371 (SGIMALIASGVVMRPYVEANI) traverse the membrane as a helical segment. Topologically, residues 372-373 (SH) are cytoplasmic. Residues 374–404 (KSHTTIKYFLKMWSSVSETLIFIFLGVSTVA) traverse the membrane as a helical segment. Residues 405–410 (GSHHWN) lie on the Extracellular side of the membrane. Residues 411-438 (WTFVISTLLFCLIARVLGVLGLTWFINK) traverse the membrane as a helical segment. At 439 to 444 (FRIVKL) the chain is on the cytoplasmic side. The chain crosses the membrane as a helical span at residues 445-469 (TPKDQFIIAYGGLRGAIAFSLGYLL). The Extracellular portion of the chain corresponds to 470–475 (DKKHFP). A helical membrane pass occupies residues 476 to 505 (MCDLFLTAIITVIFFTVFVQGMTIRPLVDL). Residues 503-545 (VDLLAVKKKQETKRSINEEIHTQFLDHLLTGIEDICGHYGHHH) are interaction with TESC. Residues 506-816 (LAVKKKQETK…EGEPFIPKGQ (311 aa)) lie on the Cytoplasmic side of the membrane. The PI(4,5)P2-binding region stretch occupies residues 509-516 (KKKQETKR). Positions 515 to 545 (KRSINEEIHTQFLDHLLTGIEDICGHYGHHH) are interaction with CHP2. The confers pH-dependent PI(4,5)P2 binding stretch occupies residues 540-545 (HYGHHH). The segment at 552–560 (RFNKKYVKK) is PI(4,5)P2-binding region. Serine 599 and serine 602 each carry phosphoserine. The residue at position 603 (threonine 603) is a Phosphothreonine. Phosphoserine is present on residues serine 605 and serine 648. Residues 633 to 816 (KILRNNLQKT…EGEPFIPKGQ (184 aa)) are interaction with TESC. An interaction with CALM1 region spans residues 633 to 816 (KILRNNLQKT…EGEPFIPKGQ (184 aa)). Residues 684–687 (LTVP) form an interaction with PPP3CA region. Phosphoserine occurs at positions 693, 697, and 703. The segment at 715–720 (PVITID) is interaction with PPP3CA. Residues serine 723, serine 726, serine 729, serine 786, serine 788, and serine 797 each carry the phosphoserine modification. Positions 748 to 816 (PRVAEEAAEE…EGEPFIPKGQ (69 aa)) are disordered. A compositionally biased stretch (polar residues) spans 783 to 792 (PSDSPSSQRM).

This sequence belongs to the monovalent cation:proton antiporter 1 (CPA1) transporter (TC 2.A.36) family. As to quaternary structure, homodimer; dimerization is crucial for its function. Oligomer. Interacts with CALM in a calcium-dependent manner. Interacts with TESC. Interacts (via the juxtamembrane region of the cytoplasmic C-terminal domain) with CHP1; the interaction occurs at the plasma membrane in a calcium-dependent manner. Interacts with CHP2; the interaction occurs in a calcium-dependent manner. Interacts with EZR; regulates the cytoskeletal interactions of SLC9A1 and promotes stress fiber formation. In terms of processing, ubiquitinated, leading to its degradation by the proteasome. Ubiquitination is reduced by CHP1. O-glycosylated. Post-translationally, palmitoylated; may play a major role in SLC9A1 regulation. In terms of processing, phosphorylation at Ser-648 by AKT1 reduces SLC9A1 binding to CALM1. Kidney and intestine.

The protein resides in the cell membrane. It localises to the basolateral cell membrane. It catalyses the reaction Na(+)(in) + H(+)(out) = Na(+)(out) + H(+)(in). The catalysed reaction is Li(+)(out) + H(+)(in) = Li(+)(in) + H(+)(out). It carries out the reaction Li(+)(in) + Na(+)(out) = Li(+)(out) + Na(+)(in). Its activity is regulated as follows. Activated at acidic pHs. Inhibited by cariporide and eniporide. Phosphatidylinositol 4,5-bisphosphate (PI(4,5)P2) and phosphatidylinositol 3,4,5-trisphosphate (PI(3,4,5)P3) bind and differentially regulate SLC9A1 activity. Electroneutral Na(+) /H(+) antiporter that extrudes Na(+) in exchange for external protons driven by the inward sodium ion chemical gradient, protecting cells from acidification that occurs from metabolism. Exchanges intracellular H(+) ions for extracellular Na(+) in 1:1 stoichiometry. Plays a key role in maintening intracellular pH neutral and cell volume, and thus is important for cell growth, proliferation, migration and survival. In addition, can transport lithium Li(+) and functions also as a Na(+)/Li(+) antiporter. SLC9A1 also functions in membrane anchoring and organization of scaffolding complexes that coordinate signaling inputs. In Oryctolagus cuniculus (Rabbit), this protein is Sodium/hydrogen exchanger 1 (SLC9A1).